We begin with the raw amino-acid sequence, 469 residues long: Glutamate--tRNA ligase (469 aa).

Positions 9–19 match the 'HIGH' region motif; that stretch reads PSPTGFLHVGG. Zn(2+)-binding residues include Cys-98, Cys-100, Cys-125, and Asp-127. Residues 236–240 carry the 'KMSKS' region motif; the sequence is KLSKR. Residue Lys-239 participates in ATP binding.

This sequence belongs to the class-I aminoacyl-tRNA synthetase family. Glutamate--tRNA ligase type 1 subfamily. In terms of assembly, monomer. The cofactor is Zn(2+).

Its subcellular location is the cytoplasm. It catalyses the reaction tRNA(Glu) + L-glutamate + ATP = L-glutamyl-tRNA(Glu) + AMP + diphosphate. Functionally, catalyzes the attachment of glutamate to tRNA(Glu) in a two-step reaction: glutamate is first activated by ATP to form Glu-AMP and then transferred to the acceptor end of tRNA(Glu). The chain is Glutamate--tRNA ligase from Shewanella sp. (strain ANA-3).